Here is a 222-residue protein sequence, read N- to C-terminus: NAD(P)H-hydrate epimerase (222 aa).

The YjeF N-terminal domain occupies 9–209 (MQQIDSYTIE…DIGLRLPEDF (201 aa)). 57-61 (NNGAD) contacts (6S)-NADPHX. Positions 58 and 119 each coordinate K(+). Residues 123–129 (GVGLNNT) and Asp-152 each bind (6S)-NADPHX. Thr-155 is a K(+) binding site.

This sequence belongs to the NnrE/AIBP family. K(+) is required as a cofactor.

The catalysed reaction is (6R)-NADHX = (6S)-NADHX. It carries out the reaction (6R)-NADPHX = (6S)-NADPHX. Its function is as follows. Catalyzes the epimerization of the S- and R-forms of NAD(P)HX, a damaged form of NAD(P)H that is a result of enzymatic or heat-dependent hydration. This is a prerequisite for the S-specific NAD(P)H-hydrate dehydratase to allow the repair of both epimers of NAD(P)HX. The chain is NAD(P)H-hydrate epimerase from Leuconostoc citreum (strain KM20).